A 150-amino-acid chain; its full sequence is Nucleoside diphosphate kinase (150 aa).

6 residues coordinate ATP: K9, F57, R85, T91, R102, and N112. H115 acts as the Pros-phosphohistidine intermediate in catalysis.

Belongs to the NDK family. Mg(2+) serves as cofactor.

It is found in the cytoplasm. The enzyme catalyses a 2'-deoxyribonucleoside 5'-diphosphate + ATP = a 2'-deoxyribonucleoside 5'-triphosphate + ADP. It carries out the reaction a ribonucleoside 5'-diphosphate + ATP = a ribonucleoside 5'-triphosphate + ADP. In terms of biological role, major role in the synthesis of nucleoside triphosphates other than ATP. The ATP gamma phosphate is transferred to the NDP beta phosphate via a ping-pong mechanism, using a phosphorylated active-site intermediate. This Methanothermobacter thermautotrophicus (strain ATCC 29096 / DSM 1053 / JCM 10044 / NBRC 100330 / Delta H) (Methanobacterium thermoautotrophicum) protein is Nucleoside diphosphate kinase.